The chain runs to 970 residues: Rho GTPase-activating protein gacK (970 aa).

A signal peptide spans 1–20 (MTLVYEKSSFVLIMAQIAEA). 5 disordered regions span residues 30-49 (SNDL…SAAI), 258-285 (STCS…INQN), 312-446 (EITI…FSPT), 487-550 (STSN…NNNN), and 860-886 (TASS…NDDP). Low complexity-rich tracts occupy residues 35–49 (STSA…SAAI) and 258–269 (STCSLSSNASNN). The span at 321–333 (IPLPPQSSSPPPT) shows a compositional bias: pro residues. A compositionally biased stretch (low complexity) spans 334-383 (RNNQSSPSPSSPQQQNIMPTPPSTSLTPPQSPTLSPSSSTHSTPTQTTTT). Residues 392–406 (PSTISQNNARKTQIP) show a composition bias toward polar residues. Low complexity predominate over residues 407 to 426 (TTTTTTTTTTTTTSTTSTTS). Residues 427-446 (PNPVVNNKNLNTPSSSFSPT) are compositionally biased toward polar residues. Residues 754–970 (IEDSELVEDN…LELIQFNKSL (217 aa)) enclose the Rho-GAP domain. Positions 860–885 (TASSAATANSSSSGSGNGNSSPNNDD) are enriched in low complexity.

Its subcellular location is the cytoplasm. Its function is as follows. Rho GTPase-activating protein involved in the signal transduction pathway. The polypeptide is Rho GTPase-activating protein gacK (gacK) (Dictyostelium discoideum (Social amoeba)).